The sequence spans 266 residues: Energy-coupling factor transporter ATP-binding protein EcfA2 (266 aa).

Residues Ile3 to Met238 form the ABC transporter domain. Gly43 to Thr48 is an ATP binding site. The Proton acceptor role is filled by Glu164. The segment at Gly220–Ser266 is required for heterodimer formation.

It belongs to the ABC transporter superfamily. Energy-coupling factor EcfA family. Forms a heterodimer with EcfA1. Forms a stable energy-coupling factor (ECF) transporter complex composed of 2 membrane-embedded substrate-binding proteins (S component, RibU, BioY), 2 ATP-binding proteins (A component) and 2 transmembrane proteins (T component) upon coexpression in E.coli. Stable subcomplexes with both A plus T components can also be isolated. This complex interacts with at least 2 substrate-specific components, BioY and RibU.

The protein resides in the cell inner membrane. In terms of biological role, ATP-binding (A) component of a common energy-coupling factor (ECF) ABC-transporter complex. Unlike classic ABC transporters this ECF transporter provides the energy necessary to transport a number of different substrates. Expression of the complex plus RibU in E.coli allows riboflavin uptake; uptake does not occur in the absence of RibU or the EcfA1A2T complex. In Thermotoga maritima (strain ATCC 43589 / DSM 3109 / JCM 10099 / NBRC 100826 / MSB8), this protein is Energy-coupling factor transporter ATP-binding protein EcfA2 (ecfA2).